A 1171-amino-acid chain; its full sequence is Stress response protein nst1 (1171 aa).

2 stretches are compositionally biased toward polar residues: residues 1–29 and 37–68; these read MPANQRKQTSQSSYLQTPRNTATPSTQDA and KSSTSDSSETFLTMAQTTTKSNGQLPTPSANI. Disordered regions lie at residues 1 to 238, 307 to 392, 433 to 510, 545 to 739, 863 to 996, and 1139 to 1171; these read MPAN…SQEE, YANH…SHAT, RMAR…RMEE, EELE…RPNQ, PMHG…DRSD, and FRAVGAPGEIGSPISGNASRNPGPPGRAPIGGF. Residues 76–86 are compositionally biased toward basic residues; the sequence is NRKKQKRRAKQ. The segment covering 87–96 has biased composition (low complexity); sequence AARAAAEQAQ. Basic and acidic residues predominate over residues 108-124; sequence DVKKQMQELEARFRETG. A compositionally biased stretch (acidic residues) spans 125-150; that stretch reads LDEQYDDDEQLDPAEDNAYYSDEEGD. Positions 160–172 are enriched in polar residues; the sequence is GSSTNGYAMPTTN. The span at 176 to 185 shows a compositional bias: basic residues; it reads KKQKKKKKSK. Residues 190–206 are compositionally biased toward polar residues; the sequence is DNSNYAHHGPNGSSHNH. Residues 226–238 show a composition bias toward basic and acidic residues; the sequence is SKEKIWNTSSQEE. Pro residues predominate over residues 315-324; sequence GPPPMMPPPR. Positions 356-384 are enriched in acidic residues; the sequence is LGDDEDEEGDEEYSEDDADEDDYSDEEPE. The span at 433–442 shows a compositional bias: basic and acidic residues; that stretch reads RMAREEDAKE. Acidic residues predominate over residues 472–503; sequence PEEDDYDDEEDDEDEYDSQEEDYDEEEMDSMT. Residues 474–733 are a coiled coil; sequence EDDYDDEEDD…VQAAQSAAQA (260 aa). A compositionally biased stretch (basic and acidic residues) spans 545–717; it reads EELEEESRAD…ARELQKREEV (173 aa). A compositionally biased stretch (low complexity) spans 718–734; sequence AAQQAAVQAAQSAAQAS. The segment covering 865 to 874 has biased composition (pro residues); the sequence is HGPPGFPQPS. A compositionally biased stretch (polar residues) spans 895-915; it reads QAHSRNQSGSFDALSSTTQAQ.

This sequence belongs to the NST1 family.

Its subcellular location is the cytoplasm. Its function is as follows. May act as a negative regulator of salt tolerance. This Sclerotinia sclerotiorum (strain ATCC 18683 / 1980 / Ss-1) (White mold) protein is Stress response protein nst1 (nst1).